The chain runs to 231 residues: MAGMVDFQDEEQVKSFLENMEVECNYHCYHEKDPDGCYRLVDYLEGIRKNFDEAAKVLKFNCEENQHSDSCYKLGAYYVTGKGGLTQDLKAAARCFLMACEKPGKKSIAACHNVGLLAHDGQVNEDGQPDLGKARDYYTRACDGGYTSSCFNLSAMFLQGAPGFPKDMDLACKYSMKACDLGHIWACANASRMYKLGDGVDKDEAKAEVLKNRAQQLHKEQQKGVQPLTFG.

N-acetylalanine is present on Ala-2. 5 Sel1-like repeats span residues 34–66, 68–104, 108–146, 147–183, and 184–219; these read PDGCYRLVDYLEGIRKNFDEAAKVLKFNCEENQ, SDSCYKLGAYYVTGKGGLTQDLKAAARCFLMACEKPG, IAACHNVGLLAHDGQVNEDGQPDLGKARDYYTRACDGGY, TSSCFNLSAMFLQGAPGFPKDMDLACKYSMKACDLGH, and IWACANASRMYKLGDGVDKDEAKAEVLKNRAQQLHK.

Belongs to the hcp beta-lactamase family. In terms of assembly, interacts with CHCHD4/MIA40 through transient intermolecular disulfide bonds.

The protein localises to the mitochondrion intermembrane space. Its function is as follows. Required for assembly of mitochondrial respiratory chain complex I and complex IV. This is Cytochrome c oxidase assembly factor 7 (COA7) from Homo sapiens (Human).